Here is a 260-residue protein sequence, read N- to C-terminus: Adenosine 5'-phosphosulfate reductase (260 aa).

[4Fe-4S] cluster is bound by residues C130, C131, C213, and C216. C241 acts as the Nucleophile; cysteine thiosulfonate intermediate in catalysis.

This sequence belongs to the PAPS reductase family. CysH subfamily. It depends on [4Fe-4S] cluster as a cofactor.

The protein localises to the cytoplasm. It catalyses the reaction [thioredoxin]-disulfide + sulfite + AMP + 2 H(+) = adenosine 5'-phosphosulfate + [thioredoxin]-dithiol. It participates in sulfur metabolism; hydrogen sulfide biosynthesis; sulfite from sulfate. Catalyzes the formation of sulfite from adenosine 5'-phosphosulfate (APS) using thioredoxin as an electron donor. This is Adenosine 5'-phosphosulfate reductase from Agrobacterium fabrum (strain C58 / ATCC 33970) (Agrobacterium tumefaciens (strain C58)).